The sequence spans 153 residues: ATP synthase subunit b' (153 aa).

The chain crosses the membrane as a helical span at residues 20 to 40 (TLPLMAVQVVLLTFILNALFF).

The protein belongs to the ATPase B chain family. In terms of assembly, F-type ATPases have 2 components, F(1) - the catalytic core - and F(0) - the membrane proton channel. F(1) has five subunits: alpha(3), beta(3), gamma(1), delta(1), epsilon(1). F(0) has four main subunits: a(1), b(1), b'(1) and c(10-14). The alpha and beta chains form an alternating ring which encloses part of the gamma chain. F(1) is attached to F(0) by a central stalk formed by the gamma and epsilon chains, while a peripheral stalk is formed by the delta, b and b' chains.

The protein localises to the cellular thylakoid membrane. F(1)F(0) ATP synthase produces ATP from ADP in the presence of a proton or sodium gradient. F-type ATPases consist of two structural domains, F(1) containing the extramembraneous catalytic core and F(0) containing the membrane proton channel, linked together by a central stalk and a peripheral stalk. During catalysis, ATP synthesis in the catalytic domain of F(1) is coupled via a rotary mechanism of the central stalk subunits to proton translocation. Functionally, component of the F(0) channel, it forms part of the peripheral stalk, linking F(1) to F(0). The b'-subunit is a diverged and duplicated form of b found in plants and photosynthetic bacteria. The polypeptide is ATP synthase subunit b' (Prochlorococcus marinus (strain NATL2A)).